Here is a 275-residue protein sequence, read N- to C-terminus: Ribosomal RNA small subunit methyltransferase A (275 aa).

S-adenosyl-L-methionine contacts are provided by asparagine 21, leucine 23, glycine 48, glutamate 69, aspartate 94, and asparagine 115.

It belongs to the class I-like SAM-binding methyltransferase superfamily. rRNA adenine N(6)-methyltransferase family. RsmA subfamily.

It localises to the cytoplasm. The enzyme catalyses adenosine(1518)/adenosine(1519) in 16S rRNA + 4 S-adenosyl-L-methionine = N(6)-dimethyladenosine(1518)/N(6)-dimethyladenosine(1519) in 16S rRNA + 4 S-adenosyl-L-homocysteine + 4 H(+). Functionally, specifically dimethylates two adjacent adenosines (A1518 and A1519) in the loop of a conserved hairpin near the 3'-end of 16S rRNA in the 30S particle. May play a critical role in biogenesis of 30S subunits. This is Ribosomal RNA small subunit methyltransferase A from Clostridium botulinum (strain Loch Maree / Type A3).